The sequence spans 61 residues: MTDLKITLIRSVAHRLPEQRKVVKALGLGKINSTVVQPDNAATRGALMKIAHLISVEEVNK.

It belongs to the universal ribosomal protein uL30 family. In terms of assembly, part of the 50S ribosomal subunit.

The chain is Large ribosomal subunit protein uL30 from Lactobacillus delbrueckii subsp. bulgaricus (strain ATCC 11842 / DSM 20081 / BCRC 10696 / JCM 1002 / NBRC 13953 / NCIMB 11778 / NCTC 12712 / WDCM 00102 / Lb 14).